Consider the following 400-residue polypeptide: Homoserine O-acetyltransferase (400 aa).

Residues 1–11 show a composition bias toward polar residues; it reads MVKVQSIQSQA. Positions 1-24 are disordered; it reads MVKVQSIQSQAVHAEERAHEADHP. Basic and acidic residues predominate over residues 13-23; the sequence is HAEERAHEADH. The region spanning 64–373 is the AB hydrolase-1 domain; that stretch reads NAILVCHALT…TDRGHDAFLL (310 aa). Ser-169 functions as the Nucleophile in the catalytic mechanism. Arg-239 contributes to the substrate binding site. Residues Asp-335 and His-368 contribute to the active site. A substrate-binding site is contributed by Asp-369.

It belongs to the AB hydrolase superfamily. MetX family. Homodimer.

It is found in the cytoplasm. It carries out the reaction L-homoserine + acetyl-CoA = O-acetyl-L-homoserine + CoA. Its pathway is amino-acid biosynthesis; L-methionine biosynthesis via de novo pathway; O-acetyl-L-homoserine from L-homoserine: step 1/1. Transfers an acetyl group from acetyl-CoA to L-homoserine, forming acetyl-L-homoserine. This chain is Homoserine O-acetyltransferase, found in Rhodopseudomonas palustris (strain BisB18).